Consider the following 378-residue polypeptide: UDP-4-amino-4-deoxy-L-arabinose--oxoglutarate aminotransferase (378 aa).

An N6-(pyridoxal phosphate)lysine modification is found at Lys-182.

The protein belongs to the DegT/DnrJ/EryC1 family. ArnB subfamily. In terms of assembly, homodimer. Pyridoxal 5'-phosphate serves as cofactor.

The catalysed reaction is UDP-4-amino-4-deoxy-beta-L-arabinose + 2-oxoglutarate = UDP-beta-L-threo-pentopyranos-4-ulose + L-glutamate. It participates in nucleotide-sugar biosynthesis; UDP-4-deoxy-4-formamido-beta-L-arabinose biosynthesis; UDP-4-deoxy-4-formamido-beta-L-arabinose from UDP-alpha-D-glucuronate: step 2/3. The protein operates within bacterial outer membrane biogenesis; lipopolysaccharide biosynthesis. In terms of biological role, catalyzes the conversion of UDP-4-keto-arabinose (UDP-Ara4O) to UDP-4-amino-4-deoxy-L-arabinose (UDP-L-Ara4N). The modified arabinose is attached to lipid A and is required for resistance to polymyxin and cationic antimicrobial peptides. In Aeromonas salmonicida (strain A449), this protein is UDP-4-amino-4-deoxy-L-arabinose--oxoglutarate aminotransferase.